We begin with the raw amino-acid sequence, 279 residues long: Ribosome maturation factor RimP (279 aa).

Residues 197–279 (LAEEGEPEEQ…GAPALRPTPK (83 aa)) are disordered. Residues 199-210 (EEGEPEEQEEGG) show a composition bias toward acidic residues.

Belongs to the RimP family.

The protein localises to the cytoplasm. Required for maturation of 30S ribosomal subunits. The chain is Ribosome maturation factor RimP from Methylocella silvestris (strain DSM 15510 / CIP 108128 / LMG 27833 / NCIMB 13906 / BL2).